Here is a 173-residue protein sequence, read N- to C-terminus: Putative pre-16S rRNA nuclease (173 aa).

Belongs to the YqgF nuclease family.

The protein resides in the cytoplasm. In terms of biological role, could be a nuclease involved in processing of the 5'-end of pre-16S rRNA. The sequence is that of Putative pre-16S rRNA nuclease from Psychrobacter cryohalolentis (strain ATCC BAA-1226 / DSM 17306 / VKM B-2378 / K5).